We begin with the raw amino-acid sequence, 142 residues long: Hemoglobin subunit alpha (142 aa).

The Globin domain maps to 2-142 (VLSPDDKKHV…VSTVLTSKYR (141 aa)). S4 is modified (phosphoserine). K8 and K12 each carry N6-succinyllysine. An N6-acetyllysine; alternate modification is found at K17. At K17 the chain carries N6-succinyllysine; alternate. Position 25 is a phosphotyrosine (Y25). Phosphoserine is present on S36. K41 is subject to N6-succinyllysine. S50 is subject to Phosphoserine. H59 contacts O2. H88 is a heme b binding site. S103 bears the Phosphoserine mark. At T109 the chain carries Phosphothreonine. A phosphoserine mark is found at S125 and S132. A phosphothreonine mark is found at T135 and T138. S139 carries the phosphoserine modification.

This sequence belongs to the globin family. As to quaternary structure, heterotetramer of two alpha chains and two beta chains. As to expression, red blood cells.

In terms of biological role, involved in oxygen transport from the lung to the various peripheral tissues. Its function is as follows. Hemopressin acts as an antagonist peptide of the cannabinoid receptor CNR1. Hemopressin-binding efficiently blocks cannabinoid receptor CNR1 and subsequent signaling. In Papio anubis (Olive baboon), this protein is Hemoglobin subunit alpha (HBA).